The chain runs to 337 residues: Large ribosomal subunit protein uL10 (337 aa).

The segment at 309–337 (EEVVEEQEEVKEEEEEESDMASGLGALFG) is disordered. Residues 310–327 (EVVEEQEEVKEEEEEESD) show a composition bias toward acidic residues.

This sequence belongs to the universal ribosomal protein uL10 family. In terms of assembly, part of the 50S ribosomal subunit. Forms part of the ribosomal stalk which helps the ribosome interact with GTP-bound translation factors. Forms a heptameric L10(L12)2(L12)2(L12)2 complex, where L10 forms an elongated spine to which the L12 dimers bind in a sequential fashion.

In terms of biological role, forms part of the ribosomal stalk, playing a central role in the interaction of the ribosome with GTP-bound translation factors. In Methanococcoides burtonii (strain DSM 6242 / NBRC 107633 / OCM 468 / ACE-M), this protein is Large ribosomal subunit protein uL10.